The following is a 397-amino-acid chain: MAFLKLTEQNVRGKTVLIRADMNVPFKGGKISDDTRIRASLASVKYCLDNGASVIVMTHLGRPTEGEFHPEDDVAPVAAHLGGLLGKDVKVLNDWRENKPALNAGDVVMLQNVRINKGEKKNDLELGKAYAALCDVFVNDAFGTAHRAQASTEAVAQAAPVACAGVLMAGELDALGKALKQPARPMVAIVAGSKVSTKLTILESLADKVDQLIVGGGIANTFLLAEGKAIGKSLAEHDLVEESKKIMAKMAAKGGSVPLPTDVVVAKAFAADAEAVVKDIADVAEDEMILDIGPKSAAALAELLKAAGTVVWNGPVGVFEFDQFAGGTKALAEAIAQSKAFSIAGGGDTLAAIAKFGVTEQIGYISTGGGAFLEFLEGKELPAVAALEKTRRVNGLI.

Substrate contacts are provided by residues 21 to 23, arginine 36, 59 to 62, arginine 114, and arginine 147; these read DMN and HLGR. ATP-binding positions include lysine 198, glutamate 320, and 346-349; that span reads GGDT.

It belongs to the phosphoglycerate kinase family. In terms of assembly, monomer.

Its subcellular location is the cytoplasm. The enzyme catalyses (2R)-3-phosphoglycerate + ATP = (2R)-3-phospho-glyceroyl phosphate + ADP. Its pathway is carbohydrate degradation; glycolysis; pyruvate from D-glyceraldehyde 3-phosphate: step 2/5. This Neisseria gonorrhoeae (strain NCCP11945) protein is Phosphoglycerate kinase.